Here is a 221-residue protein sequence, read N- to C-terminus: MKMLEQLEKKLGYTFKDKSLLEKALTHVSYSKKEHYETLEFLGDALVNFFIVDLLVQYSPNKREGFLSPLKAYLISEEFFNLLAQKLELHKFIRIKRGKINETIIGDVFEALWAAVYIDSGRDANFTRELFYKLFKEDILSAIKEGRVKKDYKTILQEITQKRWKERPEYRLISVEGPHHKKKFIVEAKIKEYRTLGEGKSKKEAEQRAAEELIKLLEESE.

The RNase III domain maps to 4 to 121 (LEQLEKKLGY…LWAAVYIDSG (118 aa)). Glutamate 40 serves as a coordination point for Mg(2+). Aspartate 44 is a catalytic residue. Residues aspartate 107 and glutamate 110 each contribute to the Mg(2+) site. Glutamate 110 is an active-site residue. Positions 151–219 (DYKTILQEIT…AEELIKLLEE (69 aa)) constitute a DRBM domain.

The protein belongs to the ribonuclease III family. Homodimer. The cofactor is Mg(2+).

The protein resides in the cytoplasm. The enzyme catalyses Endonucleolytic cleavage to 5'-phosphomonoester.. Digests double-stranded RNA. Involved in the processing of primary rRNA transcript to yield the immediate precursors to the large and small rRNAs (23S and 16S). Also processes some mRNAs, and tRNAs when they are encoded in the rRNA operon. Probably processes pre-crRNA and tracrRNA of type II CRISPR loci if present in the organism. This Aquifex aeolicus (strain VF5) protein is Ribonuclease 3 (rnc).